The chain runs to 106 residues: Urease subunit beta (106 aa).

It belongs to the urease beta subunit family. As to quaternary structure, heterotrimer of UreA (gamma), UreB (beta) and UreC (alpha) subunits. Three heterotrimers associate to form the active enzyme.

It is found in the cytoplasm. It catalyses the reaction urea + 2 H2O + H(+) = hydrogencarbonate + 2 NH4(+). Its pathway is nitrogen metabolism; urea degradation; CO(2) and NH(3) from urea (urease route): step 1/1. This chain is Urease subunit beta, found in Parasynechococcus marenigrum (strain WH8102).